Reading from the N-terminus, the 429-residue chain is Glucose-1-phosphate adenylyltransferase (429 aa).

Residues G162, 177-178, and S209 contribute to the alpha-D-glucose 1-phosphate site; that span reads EK.

It belongs to the bacterial/plant glucose-1-phosphate adenylyltransferase family. As to quaternary structure, homotetramer.

The catalysed reaction is alpha-D-glucose 1-phosphate + ATP + H(+) = ADP-alpha-D-glucose + diphosphate. Its pathway is glycan biosynthesis; glycogen biosynthesis. Its function is as follows. Involved in the biosynthesis of ADP-glucose, a building block required for the elongation reactions to produce glycogen. Catalyzes the reaction between ATP and alpha-D-glucose 1-phosphate (G1P) to produce pyrophosphate and ADP-Glc. The sequence is that of Glucose-1-phosphate adenylyltransferase from Trichormus variabilis (strain ATCC 29413 / PCC 7937) (Anabaena variabilis).